The sequence spans 187 residues: MAADISQWAGPLCLQEVDEPPQHALRVDYAGVTVDELGKVLTPTQVMNRPSSISWDGLDPGKLYTLVLTDPDAPSRKDPKFREWHHFLVVNMKGNDISSGTVLSDYVGSGPPSGTGLHRYVWLVYEQEQPLSCDEPILSNKSGDNRGKFKVETFRKKYNLGAPVAGTCYQAEWDDYVPKLYEQLSGK.

Position 2 is an N-acetylalanine; in peptide hippocampal cholinergic neurostimulating (alanine 2). Residue serine 6 is modified to Phosphoserine. At threonine 42 the chain carries Phosphothreonine. 5 positions are modified to phosphoserine: serine 51, serine 52, serine 54, serine 98, and serine 132. The interaction with RAF1 stretch occupies residues 93 to 134 (KGNDISSGTVLSDYVGSGPPSGTGLHRYVWLVYEQEQPLSCD).

It belongs to the phosphatidylethanolamine-binding protein family. Has a tendency to form dimers by disulfide cross-linking. Interacts with RAF1 and this interaction is enhanced if RAF1 is phosphorylated on residues 'Ser-338', 'Ser-339', 'Tyr-340' and 'Tyr-341'. Interacts with ALOX15; in response to IL13/interleukin-13, prevents the interaction of PEBP1 with RAF1 to activate the ERK signaling cascade. In terms of tissue distribution, HCNP is expressed in brain. Increased expression in aged senescence-accelerated mice.

The protein resides in the cytoplasm. Its function is as follows. Binds ATP, opioids and phosphatidylethanolamine. Has lower affinity for phosphatidylinositol and phosphatidylcholine. Serine protease inhibitor which inhibits thrombin, neuropsin and chymotrypsin but not trypsin, tissue type plasminogen activator and elastase. Inhibits the kinase activity of RAF1 by inhibiting its activation and by dissociating the RAF1/MEK complex and acting as a competitive inhibitor of MEK phosphorylation. In terms of biological role, HCNP may be involved in the function of the presynaptic cholinergic neurons of the central nervous system. HCNP increases the production of choline acetyltransferase but not acetylcholinesterase. Seems to be mediated by a specific receptor. The sequence is that of Phosphatidylethanolamine-binding protein 1 (Pebp1) from Mus musculus (Mouse).